The sequence spans 318 residues: uncharacterized protein (318 aa).

This sequence belongs to the NAD(P)-dependent epimerase/dehydratase family.

This is an uncharacterized protein from Staphylococcus epidermidis (strain ATCC 12228 / FDA PCI 1200).